We begin with the raw amino-acid sequence, 377 residues long: UPF0754 membrane protein GTNG_0550 (377 aa).

2 helical membrane-spanning segments follow: residues 7–27 (LLFMMAVGALIGGMTNFIAIV) and 357–377 (YLGALLGAMIGAVQGIIGLWL).

This sequence belongs to the UPF0754 family.

It localises to the cell membrane. The chain is UPF0754 membrane protein GTNG_0550 from Geobacillus thermodenitrificans (strain NG80-2).